A 1060-amino-acid polypeptide reads, in one-letter code: Centrosomal protein of 131 kDa (1060 aa).

Over residues 1–11 the composition is skewed to polar residues; that stretch reads MKGSRTITATP. Residues 1-96 form a disordered region; the sequence is MKGSRTITAT…TGSPRPAEPT (96 aa). Residues 1 to 244 form an interaction with PLK4 region; that stretch reads MKGSRTITAT…SQSARGTTGL (244 aa). A phosphoserine mark is found at Ser14 and Ser35. Composition is skewed to polar residues over residues 32-50 and 73-88; these read RPGS…SVAT and LRRS…SWTG. Ser47 is modified (phosphoserine; by MAPKAPK2). Phosphoserine; by MAPKAPK2 and PLK4 is present on Ser78. Phosphoserine is present on residues Ser89, Ser105, Ser114, Ser146, and Ser150. Disordered stretches follow at residues 136 to 155 and 217 to 248; these read LALP…LGPR and EGGE…LRRR. A compositionally biased stretch (basic and acidic residues) spans 217 to 226; sequence EGGEGSDLGK. The region spanning 263-283 is the IQ domain; the sequence is NQAAVTIQRWYRCQVQRRRAG. 2 stretches are compositionally biased toward basic and acidic residues: residues 314-327 and 344-363; these read EEAA…EKAR and KASE…RAPE. Positions 314-437 are disordered; sequence EEAARKKARE…VSGSSRGKAR (124 aa). Low complexity predominate over residues 398 to 408; the sequence is ASESSPEQWQS. Basic and acidic residues predominate over residues 409–424; sequence PEDKPQDIHSQGEARQ. Phosphothreonine is present on Thr473. Ser481 is modified (phosphoserine).

This sequence belongs to the CEP131 family. Self-associates. Associates with the centriolar satellite BBSome protein complex Interacts with BBS4; the interaction limits BBS4 availability for association with the BBSome complex, and hence negatively regulates ciliary localization of the BBSome complex. Interacts with MIB1. Interacts with PCM1; the interaction increases in response to ultraviolet light (UV) radiation. Associates with microtubule; association to microtubule is reduced in response to cellular stress, such as UV stimulation, in a process that requires p38 MAP kinase signaling. Interacts with CEP290, DCTN1, MAP1LC3B, PCNT, PCM1 and CEP152. Interacts with 14-3-3 proteins following UV-induced phosphorylation by MAPKAPK2; this inhibits formation of novel centriolar satellites. Interacts with SDCCAG8. Interacts with CCDC61. Interacts with PLK4. Ubiquitinated. Undergoes monoubiquitination catalyzed by the E3 ubiquitin-protein ligase MIB1 in proliferating cells, preventing cilia formation. Monoubiquitination by MIB1 is inhibited in response to cellular stress, such as ultraviolet light (UV) radiation or heat shock, resulting in ciliogenesis restoration. In terms of processing, MAPKAPK2-dependent phosphorylation at Ser-47 and Ser-78 occurs in response to cellular stress such as exposure to ultraviolet irradiation and promotes binding to 14-3-3 proteins which leads to cytoplasmic sequestration of CEP131 and blocks formation of new centriolar satellites. Phosphorylation at Ser-78 mediated by PLK4 is essential for proper organization and integrity of centriolar satellites but is dispensable for its localization to centrioles and its function in ciliogenesis. As to expression, localized to the pre-acrosome region of round and elongated spermatids in testis but also present in ovary, brain and adipose tissue.

Its subcellular location is the cytoplasm. The protein localises to the cytoskeleton. The protein resides in the microtubule organizing center. It is found in the centrosome. It localises to the centriolar satellite. Its subcellular location is the centriole. The protein localises to the cilium basal body. The protein resides in the cytoplasmic vesicle. It is found in the secretory vesicle. It localises to the acrosome. In terms of biological role, component of centriolar satellites contributing to the building of a complex and dynamic network required to regulate cilia/flagellum formation. In proliferating cells, MIB1-mediated ubiquitination induces its sequestration within centriolar satellites, precluding untimely cilia formation initiation. In contrast, during normal and ultraviolet or heat shock cellular stress-induced ciliogenesis, its non-ubiquitinated form is rapidly displaced from centriolar satellites and recruited to centrosome/basal bodies in a microtubule- and p38 MAPK-dependent manner. Also acts as a negative regulator of BBSome ciliary trafficking. Plays a role in sperm flagellar formation; may be involved in the regulation of intraflagellar transport (IFT) and/or intramanchette (IMT) trafficking, which are important for axoneme extension and/or cargo delivery to the nascent sperm tail. Required for optimal cell proliferation and cell cycle progression; may play a role in the regulation of genome stability and centriole duplication in non-ciliogenic cells. Involved in centriole duplication. Required for CEP152, WDR62 and CEP63 centrosomal localization and promotes the centrosomal localization of CDK2. Essential for maintaining proper centriolar satellite integrity. The sequence is that of Centrosomal protein of 131 kDa (Cep131) from Mus musculus (Mouse).